The primary structure comprises 352 residues: Galactokinase (352 aa).

14-17 (EHTD) is a binding site for substrate. ATP contacts are provided by residues serine 46 and 96-102 (GAGLSSS). Residues serine 102 and glutamate 134 each contribute to the Mg(2+) site. Catalysis depends on aspartate 146, which acts as the Proton acceptor. A substrate-binding site is contributed by tyrosine 196.

This sequence belongs to the GHMP kinase family. GalK subfamily.

It localises to the cytoplasm. The catalysed reaction is alpha-D-galactose + ATP = alpha-D-galactose 1-phosphate + ADP + H(+). It participates in carbohydrate metabolism; galactose metabolism. Its function is as follows. Catalyzes the transfer of the gamma-phosphate of ATP to D-galactose to form alpha-D-galactose-1-phosphate (Gal-1-P). The chain is Galactokinase from Thermosipho africanus (strain TCF52B).